We begin with the raw amino-acid sequence, 166 residues long: Small ribosomal subunit protein uS5 (166 aa).

Residues 11–74 form the S5 DRBM domain; the sequence is LEDRVVSINR…EDAKKNLINV (64 aa).

It belongs to the universal ribosomal protein uS5 family. In terms of assembly, part of the 30S ribosomal subunit. Contacts proteins S4 and S8.

In terms of biological role, with S4 and S12 plays an important role in translational accuracy. Located at the back of the 30S subunit body where it stabilizes the conformation of the head with respect to the body. This Latilactobacillus sakei subsp. sakei (strain 23K) (Lactobacillus sakei subsp. sakei) protein is Small ribosomal subunit protein uS5.